A 251-amino-acid polypeptide reads, in one-letter code: Imidazole glycerol phosphate synthase subunit HisF (251 aa).

Residues aspartate 11 and aspartate 130 contribute to the active site.

It belongs to the HisA/HisF family. In terms of assembly, heterodimer of HisH and HisF.

The protein localises to the cytoplasm. It carries out the reaction 5-[(5-phospho-1-deoxy-D-ribulos-1-ylimino)methylamino]-1-(5-phospho-beta-D-ribosyl)imidazole-4-carboxamide + L-glutamine = D-erythro-1-(imidazol-4-yl)glycerol 3-phosphate + 5-amino-1-(5-phospho-beta-D-ribosyl)imidazole-4-carboxamide + L-glutamate + H(+). It functions in the pathway amino-acid biosynthesis; L-histidine biosynthesis; L-histidine from 5-phospho-alpha-D-ribose 1-diphosphate: step 5/9. Functionally, IGPS catalyzes the conversion of PRFAR and glutamine to IGP, AICAR and glutamate. The HisF subunit catalyzes the cyclization activity that produces IGP and AICAR from PRFAR using the ammonia provided by the HisH subunit. This is Imidazole glycerol phosphate synthase subunit HisF from Chlorobium limicola (strain DSM 245 / NBRC 103803 / 6330).